The chain runs to 147 residues: MKVILVKDVKNVGKAGEIVNVSDGYGRNYLLPRGLAIEATESNVKALNEKKKAEEKKRQQELEEAKEMAQKLSNLSLVLKVKAGENGKLFGSVTSKDVEEALKEKGFDIDKKKIVFNENVKTTGTYYVDIKLYQGVTAKVKVDVVAE.

It belongs to the bacterial ribosomal protein bL9 family.

Functionally, binds to the 23S rRNA. This chain is Large ribosomal subunit protein bL9, found in Thermoanaerobacter pseudethanolicus (strain ATCC 33223 / 39E) (Clostridium thermohydrosulfuricum).